The chain runs to 87 residues: DNA-directed RNA polymerase subunit Rpo5 (87 aa).

It belongs to the archaeal Rpo5/eukaryotic RPB5 RNA polymerase subunit family. As to quaternary structure, part of the RNA polymerase complex.

It is found in the cytoplasm. The catalysed reaction is RNA(n) + a ribonucleoside 5'-triphosphate = RNA(n+1) + diphosphate. DNA-dependent RNA polymerase (RNAP) catalyzes the transcription of DNA into RNA using the four ribonucleoside triphosphates as substrates. The polypeptide is DNA-directed RNA polymerase subunit Rpo5 (Thermoplasma volcanium (strain ATCC 51530 / DSM 4299 / JCM 9571 / NBRC 15438 / GSS1)).